A 462-amino-acid chain; its full sequence is ATP synthase subunit beta (462 aa).

ATP is bound at residue 151-158 (GGAGVGKT).

It belongs to the ATPase alpha/beta chains family. In terms of assembly, F-type ATPases have 2 components, CF(1) - the catalytic core - and CF(0) - the membrane proton channel. CF(1) has five subunits: alpha(3), beta(3), gamma(1), delta(1), epsilon(1). CF(0) has three main subunits: a(1), b(2) and c(9-12). The alpha and beta chains form an alternating ring which encloses part of the gamma chain. CF(1) is attached to CF(0) by a central stalk formed by the gamma and epsilon chains, while a peripheral stalk is formed by the delta and b chains.

The protein resides in the cell inner membrane. It catalyses the reaction ATP + H2O + 4 H(+)(in) = ADP + phosphate + 5 H(+)(out). In terms of biological role, produces ATP from ADP in the presence of a proton gradient across the membrane. The catalytic sites are hosted primarily by the beta subunits. In Chlorobaculum parvum (strain DSM 263 / NCIMB 8327) (Chlorobium vibrioforme subsp. thiosulfatophilum), this protein is ATP synthase subunit beta.